Reading from the N-terminus, the 106-residue chain is CRISPR-associated endoribonuclease Cas2 (106 aa).

Asp22 serves as a coordination point for Mg(2+).

This sequence belongs to the CRISPR-associated endoribonuclease Cas2 protein family. Homodimer, forms a heterotetramer with a Cas1 homodimer. The cofactor is Mg(2+).

In terms of biological role, CRISPR (clustered regularly interspaced short palindromic repeat), is an adaptive immune system that provides protection against mobile genetic elements (viruses, transposable elements and conjugative plasmids). CRISPR clusters contain sequences complementary to antecedent mobile elements and target invading nucleic acids. CRISPR clusters are transcribed and processed into CRISPR RNA (crRNA). Functions as a ssRNA-specific endoribonuclease. Involved in the integration of spacer DNA into the CRISPR cassette. This Fusobacterium nucleatum subsp. nucleatum (strain ATCC 25586 / DSM 15643 / BCRC 10681 / CIP 101130 / JCM 8532 / KCTC 2640 / LMG 13131 / VPI 4355) protein is CRISPR-associated endoribonuclease Cas2.